A 326-amino-acid polypeptide reads, in one-letter code: Adenosine receptor A1 (326 aa).

Residues 1–10 lie on the Extracellular side of the membrane; sequence MPPSISAFQA. A helical membrane pass occupies residues 11–33; it reads AYIGIEVLIALVSVPGNVLVIWA. Topologically, residues 34–46 are cytoplasmic; the sequence is VKVNQALRDATFC. A helical transmembrane segment spans residues 47–69; that stretch reads FIVSLAVADVAVGALVIPLAILI. At 70 to 80 the chain is on the extracellular side; the sequence is NIGPRTYFHTC. A disulfide bond links C80 and C169. A helical transmembrane segment spans residues 81–102; that stretch reads LKVACPVLILTQSSILALLAIA. The Cytoplasmic portion of the chain corresponds to 103-123; that stretch reads VDRYLRVKIPLRYKTVVTPRR. The helical transmembrane segment at 124-146 threads the bilayer; sequence AVVAITGCWILSFVVGLTPMFGW. Residues 147-176 lie on the Extracellular side of the membrane; that stretch reads NNLSAVERDWLANGSVGEPVIECQFEKVIS. Residues N148 and N159 are each glycosylated (N-linked (GlcNAc...) asparagine). Residues 177-201 traverse the membrane as a helical segment; the sequence is MEYMVYFNFFVWVLPPLLLMVLIYM. Residues 202–235 lie on the Cytoplasmic side of the membrane; the sequence is EVFYLIRKQLNKKVSASSGDPQKYYGKELKIAKS. A helical membrane pass occupies residues 236–259; it reads LALILFLFALSWLPLHILNCITLF. Residues 260–267 are Extracellular-facing; it reads CPSCHMPR. The helical transmembrane segment at 268–292 threads the bilayer; it reads ILIYIAIFLSHGNSAMNPIVYAFRI. The Cytoplasmic portion of the chain corresponds to 293 to 326; the sequence is QKFRVTFLKIWNDHFRCQPAPPVDEDAPAERPDD. A lipid anchor (S-palmitoyl cysteine) is attached at C309.

It belongs to the G-protein coupled receptor 1 family.

The protein localises to the cell membrane. Receptor for adenosine. The activity of this receptor is mediated by G proteins which inhibit adenylyl cyclase. This chain is Adenosine receptor A1 (ADORA1), found in Bos taurus (Bovine).